Consider the following 215-residue polypeptide: Large ribosomal subunit protein bL25 (215 aa).

A compositionally biased stretch (acidic residues) spans 192–202; that stretch reads EEEEVEEEVAE. Residues 192 to 215 form a disordered region; it reads EEEEVEEEVAEPEVIKRKEEEEEE. A compositionally biased stretch (basic and acidic residues) spans 204-215; sequence EVIKRKEEEEEE.

Belongs to the bacterial ribosomal protein bL25 family. CTC subfamily. In terms of assembly, part of the 50S ribosomal subunit; part of the 5S rRNA/L5/L18/L25 subcomplex. Contacts the 5S rRNA. Binds to the 5S rRNA independently of L5 and L18.

In terms of biological role, this is one of the proteins that binds to the 5S RNA in the ribosome where it forms part of the central protuberance. In Thermotoga neapolitana (strain ATCC 49049 / DSM 4359 / NBRC 107923 / NS-E), this protein is Large ribosomal subunit protein bL25.